The chain runs to 1164 residues: WASH complex subunit 5 (1164 aa).

Belongs to the strumpellin family. As to quaternary structure, probable component of the WASH complex.

The chain is WASH complex subunit 5 from Dictyostelium discoideum (Social amoeba).